The following is a 404-amino-acid chain: Metacaspase-1A (404 aa).

Positions 1–10 are enriched in basic residues; it reads MNPHHSHHHS. The disordered stretch occupies residues 1-100; sequence MNPHHSHHHS…PSDPVSFGQG (100 aa). Residues 24–51 show a composition bias toward low complexity; the sequence is QQQPPSNPYQYNQPSPQPYQGSQPPQNG. Catalysis depends on residues histidine 200 and cysteine 256.

This sequence belongs to the peptidase C14B family.

Involved in cell death (apoptosis). This is Metacaspase-1A (casA) from Aspergillus niger (strain ATCC MYA-4892 / CBS 513.88 / FGSC A1513).